A 285-amino-acid polypeptide reads, in one-letter code: Bifunctional protein FolD (285 aa).

Residues 165 to 167 (GRS), S190, and I231 each bind NADP(+).

This sequence belongs to the tetrahydrofolate dehydrogenase/cyclohydrolase family. Homodimer.

It carries out the reaction (6R)-5,10-methylene-5,6,7,8-tetrahydrofolate + NADP(+) = (6R)-5,10-methenyltetrahydrofolate + NADPH. The enzyme catalyses (6R)-5,10-methenyltetrahydrofolate + H2O = (6R)-10-formyltetrahydrofolate + H(+). It participates in one-carbon metabolism; tetrahydrofolate interconversion. Catalyzes the oxidation of 5,10-methylenetetrahydrofolate to 5,10-methenyltetrahydrofolate and then the hydrolysis of 5,10-methenyltetrahydrofolate to 10-formyltetrahydrofolate. In Verminephrobacter eiseniae (strain EF01-2), this protein is Bifunctional protein FolD.